The chain runs to 328 residues: Phosphate acyltransferase (328 aa).

This sequence belongs to the PlsX family. Homodimer. Probably interacts with PlsY.

It is found in the cytoplasm. It catalyses the reaction a fatty acyl-[ACP] + phosphate = an acyl phosphate + holo-[ACP]. Its pathway is lipid metabolism; phospholipid metabolism. Functionally, catalyzes the reversible formation of acyl-phosphate (acyl-PO(4)) from acyl-[acyl-carrier-protein] (acyl-ACP). This enzyme utilizes acyl-ACP as fatty acyl donor, but not acyl-CoA. This is Phosphate acyltransferase from Campylobacter jejuni (strain RM1221).